The primary structure comprises 276 residues: Large ribosomal subunit protein uL2 (276 aa).

Positions 221–276 (RGSAMNPNDHPHGGGEGRAPIGRKSPMTPWGKKARGVKTRDRKKASNALIIRRRKK) are disordered. The segment covering 252 to 276 (KKARGVKTRDRKKASNALIIRRRKK) has biased composition (basic residues).

Belongs to the universal ribosomal protein uL2 family. As to quaternary structure, part of the 50S ribosomal subunit. Forms a bridge to the 30S subunit in the 70S ribosome.

In terms of biological role, one of the primary rRNA binding proteins. Required for association of the 30S and 50S subunits to form the 70S ribosome, for tRNA binding and peptide bond formation. It has been suggested to have peptidyltransferase activity; this is somewhat controversial. Makes several contacts with the 16S rRNA in the 70S ribosome. The sequence is that of Large ribosomal subunit protein uL2 from Aster yellows witches'-broom phytoplasma (strain AYWB).